A 270-amino-acid polypeptide reads, in one-letter code: Undecaprenyl-diphosphatase 2 (270 aa).

8 consecutive transmembrane segments (helical) span residues M1–V21, Q39–F59, W87–I107, P114–V134, L147–T167, F190–L210, A221–L241, and V247–F267.

This sequence belongs to the UppP family.

It localises to the cell inner membrane. It carries out the reaction di-trans,octa-cis-undecaprenyl diphosphate + H2O = di-trans,octa-cis-undecaprenyl phosphate + phosphate + H(+). Catalyzes the dephosphorylation of undecaprenyl diphosphate (UPP). Confers resistance to bacitracin. The polypeptide is Undecaprenyl-diphosphatase 2 (Stutzerimonas stutzeri (strain A1501) (Pseudomonas stutzeri)).